Here is a 500-residue protein sequence, read N- to C-terminus: L-arabinose isomerase (500 aa).

Residues E306, E333, H350, and H450 each coordinate Mn(2+).

Belongs to the arabinose isomerase family. Homohexamer. It depends on Mn(2+) as a cofactor.

It carries out the reaction beta-L-arabinopyranose = L-ribulose. The protein operates within carbohydrate degradation; L-arabinose degradation via L-ribulose; D-xylulose 5-phosphate from L-arabinose (bacterial route): step 1/3. Its function is as follows. Catalyzes the conversion of L-arabinose to L-ribulose. The polypeptide is L-arabinose isomerase (Enterobacter sp. (strain 638)).